The primary structure comprises 1146 residues: Sodium/hydrogen exchanger 7 (1146 aa).

Residues 1-28 (MTTVIDATMAYRFLEEATDSSSSSSSSK) are Extracellular-facing. A helical transmembrane segment spans residues 29–49 (LESSPVDAVLFVGMSLVLGIA). Topologically, residues 50–58 (SRHLLRGTR) are cytoplasmic. A helical transmembrane segment spans residues 59 to 79 (VPYTVALLVIGIALGSLEYGA). Residues 80–99 (KHNLGKIGHGIRIWNEIDPE) are Extracellular-facing. Residues 100–120 (LLLAVFLPALLFESSFSMEVH) traverse the membrane as a helical segment. The Cytoplasmic portion of the chain corresponds to 121-127 (QIKRCLG). The chain crosses the membrane as a helical span at residues 128-148 (QMVLLAVPGVLISTACLGSLV). Residues 149 to 159 (KVTFPYEWDWK) are Extracellular-facing. Residues 160-180 (TSLLLGGLLSATDPVAVVALL) form a helical membrane-spanning segment. Residues 181-191 (KELGASKKLST) lie on the Cytoplasmic side of the membrane. Residues 192–212 (IIEGESLMNDGTAIVVFQLFL) form a helical membrane-spanning segment. At 213–227 (KMAMGQNSDWSSIIK) the chain is on the extracellular side. The helical transmembrane segment at 228–250 (FLLKVALGAVGIGLAFGIASVIW) threads the bilayer. The Cytoplasmic segment spans residues 251 to 253 (LKF). A helical transmembrane segment spans residues 254–273 (IFNDTVIEITLTIAVSYFAY). Residues 274–278 (YTAQE) lie on the Extracellular side of the membrane. The helical transmembrane segment at 279–299 (WAGASGVLTVMTLGMFYAAFA) threads the bilayer. Topologically, residues 300-313 (RTAFKGDSQKSLHH) are cytoplasmic. A helical membrane pass occupies residues 314 to 334 (FWEMVAYIANTLIFILSGVVI). The Extracellular portion of the chain corresponds to 335 to 352 (AEGILDSDKIAYQGNSWR). A helical transmembrane segment spans residues 353 to 373 (FLFLLYVYIQLSRVVVVGVLY). Residues 374-387 (PLLCRFGYGLDWKE) are Cytoplasmic-facing. A helical membrane pass occupies residues 388-408 (SIILVWSGLRGAVALALSLSV). At 409–420 (KQSSGNSHISKE) the chain is on the extracellular side. A helical transmembrane segment spans residues 421 to 441 (TGTLFLFFTGGIVFLTLIVNG). Topologically, residues 442–1146 (STTQFVLRLL…PSKIVFRNDL (705 aa)) are cytoplasmic. Disordered stretches follow at residues 981-1001 (LHRRPSSLTPPRSSSSDQLQR) and 1102-1128 (CQLPLKGESSTRQNTMVESSDEEDEDE). The segment covering 986–996 (SSLTPPRSSSS) has biased composition (low complexity). Residues 1109 to 1118 (ESSTRQNTMV) are compositionally biased toward polar residues.

Belongs to the monovalent cation:proton antiporter 1 (CPA1) transporter (TC 2.A.36) family. In terms of assembly, interacts with CIPK24/SOS2 and CBL4/SOS3. Post-translationally, phosphorylated by CIPK24/SOS2 in complex with CBL4/SOS3. More expressed in roots than in shoots. Mostly localized in parenchyma cells at the xylem/symplast boundary in roots, hypocotyls, stems and leaves. Also present in root tips epidermal cells.

It is found in the cell membrane. It catalyses the reaction Na(+)(in) + H(+)(out) = Na(+)(out) + H(+)(in). The enzyme catalyses K(+)(in) + H(+)(out) = K(+)(out) + H(+)(in). Acts in electroneutral exchange of protons for cations such as Na(+) or Li(+) across plasma membrane. Involved in Na(+) and K(+) homeostasis. Required for cytoplasmic Na(+) and Li(+) detoxification by secreting them from the cytoplasm to the extracellular space. Regulates Na(+) content of the xylem sap. This chain is Sodium/hydrogen exchanger 7 (NHX7), found in Arabidopsis thaliana (Mouse-ear cress).